The primary structure comprises 325 residues: 4-diphosphocytidyl-2-C-methyl-D-erythritol kinase (325 aa).

K22 is an active-site residue. Residue 110-120 (PVAGGMAGGSA) coordinates ATP. The active site involves D152. Residues 306-325 (PAPGARVLEAVSTPSPGGRS) are disordered.

This sequence belongs to the GHMP kinase family. IspE subfamily.

It carries out the reaction 4-CDP-2-C-methyl-D-erythritol + ATP = 4-CDP-2-C-methyl-D-erythritol 2-phosphate + ADP + H(+). It participates in isoprenoid biosynthesis; isopentenyl diphosphate biosynthesis via DXP pathway; isopentenyl diphosphate from 1-deoxy-D-xylulose 5-phosphate: step 3/6. Catalyzes the phosphorylation of the position 2 hydroxy group of 4-diphosphocytidyl-2C-methyl-D-erythritol. The protein is 4-diphosphocytidyl-2-C-methyl-D-erythritol kinase of Kineococcus radiotolerans (strain ATCC BAA-149 / DSM 14245 / SRS30216).